The chain runs to 501 residues: Cystine/glutamate transporter (501 aa).

Residues 1 to 43 (MVRKPVVSTISKGGYLQGNVNGRLPSLGNKEPPGQEKVQLKRK) are Cytoplasmic-facing. Ser26 is modified (phosphoserine). The helical transmembrane segment at 44–64 (VTLLRGVSIIIGTIIGAGIFI) threads the bilayer. At 65–74 (SPKGVLQNTG) the chain is on the extracellular side. Residues 75–95 (SVGMSLTIWTVCGVLSLFGAL) form a helical membrane-spanning segment. Topologically, residues 96 to 101 (SYAELG) are cytoplasmic. Residues 102–116 (TTIKKSGGHYTYILE) lie within the membrane without spanning it. Over 117–130 (VFGPLPAFVRVWVE) the chain is Cytoplasmic. A helical membrane pass occupies residues 131–150 (LLIIRPAATAVISLAFGRYI). Arg135 provides a ligand contact to L-glutamate. Over 151 to 163 (LEPFFIQCEIPEL) the chain is Extracellular. The chain crosses the membrane as a helical span at residues 164–179 (AIKLITAVGITVVMVL). The Cytoplasmic portion of the chain corresponds to 180-193 (NSMSVSWSARIQIF). The chain crosses the membrane as a helical span at residues 194-210 (LTFCKLTAILIIIVPGV). Residues 211–234 (MQLIKGQTQNFKDAFSGRDSSITR) lie on the Extracellular side of the membrane. A helical transmembrane segment spans residues 235-255 (LPLAFYYGMYAYAGWFYLNFV). Residue Tyr244 coordinates L-glutamate. Topologically, residues 256-265 (TEEVENPEKT) are cytoplasmic. The chain crosses the membrane as a helical span at residues 266 to 286 (IPLAICISMAIVTIGYVLTNV). Over 287 to 317 (AYFTTINAEELLLSNAVAVTFSERLLGNFSL) the chain is Extracellular. Asn314 is a glycosylation site (N-linked (GlcNAc...) asparagine). Residues 318 to 338 (AVPIFVALSCFGSMNGGVFAV) traverse the membrane as a helical segment. Residues 339-364 (SRLFYVASREGHLPEILSMIHVRKHT) are Cytoplasmic-facing. Residues 365–385 (PLPAVIVLHPLTMIMLFSGDL) form a helical membrane-spanning segment. The Extracellular segment spans residues 386–387 (DS). A helical transmembrane segment spans residues 388-408 (LLNFLSFARWLFIGLAVAGLI). Over 409–422 (YLRYKCPDMHRPFK) the chain is Cytoplasmic. Residues 423 to 443 (VPLFIPALFSFTCLFMVALSL) traverse the membrane as a helical segment. The Extracellular segment spans residues 444-449 (YSDPFS). A helical transmembrane segment spans residues 450–470 (TGIGFVITLTGVPAYYLFIIW). Residues 471-501 (DKKPRWFRIMSEKITRTLQIILEVVPEEDKL) lie on the Cytoplasmic side of the membrane.

Belongs to the amino acid-polyamine-organocation (APC) superfamily. L-type amino acid transporter (LAT) (TC 2.A.3.8) family. Disulfide-linked heterodimer with the amino acid transport protein SLC3A2/4F2hc; this interaction mediates cell membrane localization. Post-translationally, ubiquitinated by TRIM26; leading to proteasomal degradation. Expressed in term placenta and primary term cytotrophoblast. Expressed mainly in the brain, but also in pancreas.

It is found in the cell membrane. Its subcellular location is the cell projection. It localises to the microvillus membrane. It catalyses the reaction L-cystine(out) + L-glutamate(in) = L-cystine(in) + L-glutamate(out). The catalysed reaction is an L-alpha-amino acid(in) + L-kynurenine(out) = an L-alpha-amino acid(out) + L-kynurenine(in). The enzyme catalyses N-acetyl-L-cysteine(out) + L-glutamate(in) = N-acetyl-L-cysteine(in) + L-glutamate(out). Its activity is regulated as follows. Inhibited by erastin and sulfasalazine. Inhibited by (S)-lactate. Inactivated by p-chloromercuribenzoic acid and p-chloromercuribenzenesulfonic acid. Functionally, heterodimer with SLC3A2, that functions as an antiporter by mediating the exchange of extracellular anionic L-cystine and intracellular L-glutamate across the cellular plasma membrane. Provides L-cystine for the maintenance of the redox balance between extracellular L-cystine and L-cysteine and for the maintenance of the intracellular levels of glutathione that is essential for cells protection from oxidative stress. The transport is sodium-independent, electroneutral with a stoichiometry of 1:1, and is drove by the high intracellular concentration of L-glutamate and the intracellular reduction of L-cystine. In addition, mediates the import of L-kynurenine leading to anti-ferroptotic signaling propagation required to maintain L-cystine and glutathione homeostasis. Moreover, mediates N-acetyl-L-cysteine uptake into the placenta leading to subsequently down-regulation of pathways associated with oxidative stress, inflammation and apoptosis. In vitro can also transport L-aspartate. May participate in astrocyte and meningeal cell proliferation during development and can provide neuroprotection by promoting glutathione synthesis and delivery from non-neuronal cells such as astrocytes and meningeal cells to immature neurons. Controls the production of pheomelanin pigment directly. The sequence is that of Cystine/glutamate transporter from Homo sapiens (Human).